A 478-amino-acid chain; its full sequence is Zinc finger protein 410 (478 aa).

Disordered regions lie at residues 84 to 113 (PDGE…LQDL) and 187 to 214 (NAKT…PLPQ). Polar residues predominate over residues 103–113 (TPESPSLLQDL). 5 consecutive C2H2-type zinc fingers follow at residues 219-243 (LKCT…LKTH), 249-273 (FICP…MRTH), 279-303 (FMCH…RRIH), 309-333 (FLCE…LVVH), and 339-362 (HQCQ…RKHH). 20 residues coordinate Zn(2+): Cys221, Cys226, His239, His243, Cys251, Cys256, His269, His273, Cys281, Cys286, His299, His303, Cys311, Cys316, His329, His333, Cys341, Cys344, His357, and His361.

Interacts with CDKN2A/p14ARF. O-glycosylated. O-GlcNAcylation may occur in response to increasing glucose levels and affect transcription factor activity. Post-translationally, sumoylated. Sumoylation increases its half-life, possibly by blocking ubiquitin-mediated degradation.

It is found in the nucleus. The protein localises to the chromosome. Functionally, transcription factor that binds to the sequence motif 5'-CATCCCATAATA-3', and is specifically required to silence expression of fetal hemoglobin in adult erythroid cells. Prevents expression of fetal hemoglobin genes HBG1 and HBG2 through CHD4: acts as a direct transcriptional activator of CHD4, a central component of the NuRD complex that represses transcription of fetal hemoglobin genes HBG1 and HBG2 in erythroid cells. May also activate transcription of matrix-remodeling genes such as MMP1 during fibroblast senescence. May activate transcription of the gap junction gene GJC1, perhaps in response to increasing glucose. However, recent studies suggest that ZNF410 is dedicated to regulate expression of a single gene: CHD4. The polypeptide is Zinc finger protein 410 (Mus musculus (Mouse)).